The following is a 976-amino-acid chain: Vacuolar membrane protease (976 aa).

Residues 1–51 are Cytoplasmic-facing; sequence MPLSTGLTLSSLNVMEKADNHYNMMTKQPPALSPVDMVSSRRGFNPIAFTP. The chain crosses the membrane as a helical span at residues 52–72; it reads WPVTILSSLVYLAFIIPIIVV. Over 73–399 the chain is Vacuolar; it reads HHLVPPAPKE…DNGNDGKLNN (327 aa). N-linked (GlcNAc...) asparagine glycans are attached at residues Asn147 and Asn150. Residues His206 and Asp218 each contribute to the Zn(2+) site. Glu252 functions as the Proton acceptor in the catalytic mechanism. Glu253, Glu278, and His351 together coordinate Zn(2+). The chain crosses the membrane as a helical span at residues 400 to 420; the sequence is GAGTLGVWFDFYGSSFAVFEL. Residues 421 to 427 lie on the Cytoplasmic side of the membrane; it reads NTLFGHS. The helical transmembrane segment at 428–448 threads the bilayer; sequence VALLVVAPLLLIATCVTLYTL. Over 449-477 the chain is Vacuolar; it reads DKMYMFSMYTYLSESGGQVSLYGLRGLFR. Residues 478 to 498 traverse the membrane as a helical segment; sequence FPLILGISTALTIGLAFLLMK. Topologically, residues 499 to 519 are cytoplasmic; the sequence is ANPFIIYSSPYAVWNPSALHR. A helical membrane pass occupies residues 520 to 540; that stretch reads AYAFTWMFGMMWVLLVIATVY. The Vacuolar portion of the chain corresponds to 541–550; it reads QKQHGIASSY. A helical transmembrane segment spans residues 551–571; the sequence is FIVFYFAGVSIATWISYLELF. Residues 572 to 675 are Cytoplasmic-facing; that stretch reads GLPTTQDYAR…HRLEQRWSIN (104 aa). The segment at 590–633 is disordered; sequence TPSSDSRLLAPSADELPPSGSAAGHDFNPEDVEDEEPTESTSLL. Residues 618–627 show a composition bias toward acidic residues; it reads PEDVEDEEPT. Residues 676 to 696 form a helical membrane-spanning segment; sequence LISSAWILQFLFVAPIVIILL. Residues 697-718 lie on the Vacuolar side of the membrane; that stretch reads GQLGLFLTSATYQIGADGGSQL. A helical membrane pass occupies residues 719–739; sequence VIYVGIAVLSVLILLPLFPFI. The Cytoplasmic portion of the chain corresponds to 740-745; that stretch reads HRFTYH. Residues 746–766 form a helical membrane-spanning segment; that stretch reads IPTFLLFVLIGTLVYNLTAFP. Residues 767 to 976 are Vacuolar-facing; the sequence is FSHSNRLKVA…LVEGSHSFKL (210 aa). A glycan (N-linked (GlcNAc...) asparagine) is linked at Asn848.

It belongs to the peptidase M28 family. Zn(2+) serves as cofactor.

It localises to the vacuole membrane. Its function is as follows. May be involved in vacuolar sorting and osmoregulation. The protein is Vacuolar membrane protease of Arthroderma otae (strain ATCC MYA-4605 / CBS 113480) (Microsporum canis).